The following is a 174-amino-acid chain: Probable phenolic acid decarboxylase (174 aa).

This sequence belongs to the PadC family.

Its function is as follows. Catalyzes the decarboxylation of phenolic acids. In Vibrio cholerae serotype O1 (strain ATCC 39315 / El Tor Inaba N16961), this protein is Probable phenolic acid decarboxylase (padC).